Here is a 64-residue protein sequence, read N- to C-terminus: Prokaryotic ubiquitin-like protein Pup (64 aa).

Basic and acidic residues-rich tracts occupy residues 1-11 (MAQEQTKRTGG) and 25-34 (GQERREKLAE). Positions 1-38 (MAQEQTKRTGGGDEDEGSAGPEAAGQERREKLAEDTDD) are disordered. Residues 21–58 (PEAAGQERREKLAEDTDDLLDEIDDVLEENAEDFVRAY) form an ARC ATPase binding region. The stretch at 24 to 52 (AGQERREKLAEDTDDLLDEIDDVLEENAE) forms a coiled coil. Q64 carries the deamidated glutamine modification. Q64 participates in a covalent cross-link: Isoglutamyl lysine isopeptide (Gln-Lys) (interchain with K-? in acceptor proteins).

This sequence belongs to the prokaryotic ubiquitin-like protein family. Strongly interacts with the proteasome-associated ATPase ARC through a hydrophobic interface; the interacting region of Pup lies in its C-terminal half. There is one Pup binding site per ARC hexamer ring. Post-translationally, is modified by deamidation of its C-terminal glutamine to glutamate by the deamidase Dop, a prerequisite to the subsequent pupylation process.

The protein operates within protein degradation; proteasomal Pup-dependent pathway. Functionally, protein modifier that is covalently attached to lysine residues of substrate proteins, thereby targeting them for proteasomal degradation. The tagging system is termed pupylation. This is Prokaryotic ubiquitin-like protein Pup from Nocardia farcinica (strain IFM 10152).